Reading from the N-terminus, the 809-residue chain is Trimethylamine-N-oxide reductase 2 (809 aa).

Positions methionine 1–alanine 31 form a signal peptide, tat-type signal. Serine 176 contacts Mo-bis(molybdopterin guanine dinucleotide).

It belongs to the prokaryotic molybdopterin-containing oxidoreductase family. Mo-bis(molybdopterin guanine dinucleotide) is required as a cofactor. Post-translationally, predicted to be exported by the Tat system. The position of the signal peptide cleavage has not been experimentally proven.

The protein localises to the periplasm. The enzyme catalyses trimethylamine + 2 Fe(III)-[cytochrome c] + H2O = trimethylamine N-oxide + 2 Fe(II)-[cytochrome c] + 3 H(+). In terms of biological role, reduces trimethylamine-N-oxide (TMAO) into trimethylamine; an anaerobic reaction coupled to energy-yielding reactions. Can also reduce other N- and S-oxide compounds such as 4-methylmorpholine-N-oxide and biotin sulfoxide (BSO), but with a lower catalytic efficiency. The protein is Trimethylamine-N-oxide reductase 2 (torZ) of Escherichia coli O157:H7.